We begin with the raw amino-acid sequence, 46 residues long: uncharacterized protein (46 aa).

This is an uncharacterized protein from Acidianus sp. F28 (AFV-2).